An 825-amino-acid polypeptide reads, in one-letter code: AMP deaminase 2 (825 aa).

Positions 1–49 (MASYPSGSGKPKAKYPFKKRASLQASTAAPEARGGLGAPPLQSARSLPG) are disordered. A compositionally biased stretch (basic residues) spans 11–21 (PKAKYPFKKRA). S22 is modified (phosphoserine). R45 is subject to Omega-N-methylarginine. Residues S46, S64, and S80 each carry the phosphoserine modification. Phosphotyrosine is present on Y91. Residues S97 and S114 each carry the phosphoserine modification. The residue at position 134 (T134) is a Phosphothreonine. Residues S136 and S138 each carry the phosphoserine modification. Residues H364 and H366 each coordinate Zn(2+). Residues H366 and 435–440 (KFNAKY) each bind substrate. Position 633 (H633) interacts with Zn(2+). E636 contacts substrate. The Proton acceptor role is filled by H655. Residue D710 coordinates Zn(2+). 711–714 (DPLQ) serves as a coordination point for substrate.

It belongs to the metallo-dependent hydrolases superfamily. Adenosine and AMP deaminases family. In terms of assembly, homotetramer. Requires Zn(2+) as cofactor. In terms of tissue distribution, highly expressed in cerebellum.

It carries out the reaction AMP + H2O + H(+) = IMP + NH4(+). The protein operates within purine metabolism; IMP biosynthesis via salvage pathway; IMP from AMP: step 1/1. In terms of biological role, AMP deaminase plays a critical role in energy metabolism. Catalyzes the deamination of AMP to IMP and plays an important role in the purine nucleotide cycle. The sequence is that of AMP deaminase 2 from Homo sapiens (Human).